Here is a 50-residue protein sequence, read N- to C-terminus: Tubulin alpha chain (50 aa).

Asn-28 is a binding site for GTP. Glu-40 is an active-site residue.

It belongs to the tubulin family. In terms of assembly, dimer of alpha and beta chains. A typical microtubule is a hollow water-filled tube with an outer diameter of 25 nm and an inner diameter of 15 nM. Alpha-beta heterodimers associate head-to-tail to form protofilaments running lengthwise along the microtubule wall with the beta-tubulin subunit facing the microtubule plus end conferring a structural polarity. Microtubules usually have 13 protofilaments but different protofilament numbers can be found in some organisms and specialized cells. The cofactor is Mg(2+).

It is found in the cytoplasm. It localises to the cytoskeleton. The catalysed reaction is GTP + H2O = GDP + phosphate + H(+). Its function is as follows. Tubulin is the major constituent of microtubules, a cylinder consisting of laterally associated linear protofilaments composed of alpha- and beta-tubulin heterodimers. Microtubules grow by the addition of GTP-tubulin dimers to the microtubule end, where a stabilizing cap forms. Below the cap, tubulin dimers are in GDP-bound state, owing to GTPase activity of alpha-tubulin. The protein is Tubulin alpha chain of Populus euphratica (Euphrates poplar).